A 150-amino-acid chain; its full sequence is Ankyrin repeat protein C18/B24 (150 aa).

The stretch at 41–73 (ENKTLLYYAVDVNNIQFAKRLLEYGASVTTSRS) is one ANK repeat.

The polypeptide is Ankyrin repeat protein C18/B24 (Vaccinia virus (strain Copenhagen) (VACV)).